We begin with the raw amino-acid sequence, 223 residues long: Fibroblast growth factor-binding protein 2 (223 aa).

Positions 1 to 19 (MKFVPCLLLVTLSCLGTLG) are cleaved as a signal peptide. Residues 23–45 (RQKQGSTGEEFHFQTGGRDSCTM) are disordered. Disulfide bonds link Cys-43/Cys-63, Cys-72/Cys-106, and Cys-81/Cys-117. The disordered stretch occupies residues 120 to 201 (AGPQAHMQQV…PGGNEEAKKK (82 aa)). Polar residues predominate over residues 125–144 (HMQQVTSSLKGSPEPNQQPE). A compositionally biased stretch (low complexity) spans 175–186 (AKPTTRPTAKPT). A disulfide bond links Cys-206 and Cys-214.

This sequence belongs to the fibroblast growth factor-binding protein family. Expressed in serum, peripheral leukocytes and cytotoxic T-lymphocytes, but not in granulocytes and monocytes (at protein level).

It is found in the secreted. It localises to the extracellular space. This chain is Fibroblast growth factor-binding protein 2 (FGFBP2), found in Homo sapiens (Human).